Consider the following 362-residue polypeptide: 3-dehydroquinate synthase (362 aa).

Residues 72 to 77 (SGEQAK), 106 to 110 (GVVGD), 130 to 131 (TT), K142, and K151 contribute to the NAD(+) site. 3 residues coordinate Zn(2+): E184, H246, and H263.

This sequence belongs to the sugar phosphate cyclases superfamily. Dehydroquinate synthase family. It depends on NAD(+) as a cofactor. Co(2+) serves as cofactor. Requires Zn(2+) as cofactor.

The protein resides in the cytoplasm. It carries out the reaction 7-phospho-2-dehydro-3-deoxy-D-arabino-heptonate = 3-dehydroquinate + phosphate. It participates in metabolic intermediate biosynthesis; chorismate biosynthesis; chorismate from D-erythrose 4-phosphate and phosphoenolpyruvate: step 2/7. Catalyzes the conversion of 3-deoxy-D-arabino-heptulosonate 7-phosphate (DAHP) to dehydroquinate (DHQ). The sequence is that of 3-dehydroquinate synthase from Bacillus subtilis (strain 168).